Consider the following 245-residue polypeptide: Retrovirus-related Pol polyprotein from type-1 retrotransposable element R1 (245 aa).

In terms of domain architecture, Reverse transcriptase spans 1–105 (LKDGTGIVAA…VDLETYCNKA (105 aa)). A nucleic acid-binding endonuclease region spans residues 106–245 (EVRQKFREKE…IVRDDSNLEQ (140 aa)).

The catalysed reaction is DNA(n) + a 2'-deoxyribonucleoside 5'-triphosphate = DNA(n+1) + diphosphate. The sequence is that of Retrovirus-related Pol polyprotein from type-1 retrotransposable element R1 from Popillia japonica (Japanese beetle).